Here is a 145-residue protein sequence, read N- to C-terminus: Large ribosomal subunit protein uL11 (145 aa).

Belongs to the universal ribosomal protein uL11 family. In terms of assembly, part of the ribosomal stalk of the 50S ribosomal subunit. Interacts with L10 and the large rRNA to form the base of the stalk. L10 forms an elongated spine to which L12 dimers bind in a sequential fashion forming a multimeric L10(L12)X complex. Post-translationally, one or more lysine residues are methylated.

Its function is as follows. Forms part of the ribosomal stalk which helps the ribosome interact with GTP-bound translation factors. This is Large ribosomal subunit protein uL11 from Rickettsia africae (strain ESF-5).